The sequence spans 149 residues: UPF0179 protein TON_1048 (149 aa).

Belongs to the UPF0179 family.

This is UPF0179 protein TON_1048 from Thermococcus onnurineus (strain NA1).